The sequence spans 156 residues: ATP synthase subunit b (156 aa).

Residues 7–27 form a helical membrane-spanning segment; that stretch reads LFVQAIVFLILVWFTMQFVWP.

This sequence belongs to the ATPase B chain family. F-type ATPases have 2 components, F(1) - the catalytic core - and F(0) - the membrane proton channel. F(1) has five subunits: alpha(3), beta(3), gamma(1), delta(1), epsilon(1). F(0) has three main subunits: a(1), b(2) and c(10-14). The alpha and beta chains form an alternating ring which encloses part of the gamma chain. F(1) is attached to F(0) by a central stalk formed by the gamma and epsilon chains, while a peripheral stalk is formed by the delta and b chains.

Its subcellular location is the cell inner membrane. In terms of biological role, f(1)F(0) ATP synthase produces ATP from ADP in the presence of a proton or sodium gradient. F-type ATPases consist of two structural domains, F(1) containing the extramembraneous catalytic core and F(0) containing the membrane proton channel, linked together by a central stalk and a peripheral stalk. During catalysis, ATP synthesis in the catalytic domain of F(1) is coupled via a rotary mechanism of the central stalk subunits to proton translocation. Component of the F(0) channel, it forms part of the peripheral stalk, linking F(1) to F(0). This chain is ATP synthase subunit b, found in Verminephrobacter eiseniae (strain EF01-2).